We begin with the raw amino-acid sequence, 132 residues long: uncharacterized protein (132 aa).

The chain crosses the membrane as a helical span at residues 105-125 (VHGYVVFWLSILCILIIIFVY).

It is found in the membrane. This is an uncharacterized protein from Methanocaldococcus jannaschii (strain ATCC 43067 / DSM 2661 / JAL-1 / JCM 10045 / NBRC 100440) (Methanococcus jannaschii).